The chain runs to 119 residues: Holo-[acyl-carrier-protein] synthase (119 aa).

Mg(2+) is bound by residues Asp-8 and Glu-58.

It belongs to the P-Pant transferase superfamily. AcpS family. The cofactor is Mg(2+).

Its subcellular location is the cytoplasm. The catalysed reaction is apo-[ACP] + CoA = holo-[ACP] + adenosine 3',5'-bisphosphate + H(+). In terms of biological role, transfers the 4'-phosphopantetheine moiety from coenzyme A to a Ser of acyl-carrier-protein. The polypeptide is Holo-[acyl-carrier-protein] synthase (Bacillus cereus (strain ATCC 14579 / DSM 31 / CCUG 7414 / JCM 2152 / NBRC 15305 / NCIMB 9373 / NCTC 2599 / NRRL B-3711)).